The primary structure comprises 483 residues: FAD-linked oxidoreductase easE (483 aa).

The FAD-binding PCMH-type domain occupies 10–193; sequence QGRLPFYSAV…TEATVRVFSD (184 aa).

Belongs to the oxygen-dependent FAD-linked oxidoreductase family. The cofactor is FAD.

Its pathway is alkaloid biosynthesis; ergot alkaloid biosynthesis. Its function is as follows. FAD-linked oxidoreductase; part of the gene cluster that mediates the biosynthesis of fungal ergot alkaloid. DmaW catalyzes the first step of ergot alkaloid biosynthesis by condensing dimethylallyl diphosphate (DMAP) and tryptophan to form 4-dimethylallyl-L-tryptophan. The second step is catalyzed by the methyltransferase easF that methylates 4-dimethylallyl-L-tryptophan in the presence of S-adenosyl-L-methionine, resulting in the formation of 4-dimethylallyl-L-abrine. The catalase easC and the FAD-dependent oxidoreductase easE then transform 4-dimethylallyl-L-abrine to chanoclavine-I which is further oxidized by easD in the presence of NAD(+), resulting in the formation of chanoclavine-I aldehyde. Agroclavine dehydrogenase easG then mediates the conversion of chanoclavine-I aldehyde to agroclavine via a non-enzymatic adduct reaction: the substrate is an iminium intermediate that is formed spontaneously from chanoclavine-I aldehyde in the presence of glutathione. The presence of easA is not required to complete this reaction. Further conversion of agroclavine to paspalic acid is a two-step process involving oxidation of agroclavine to elymoclavine and of elymoclavine to paspalic acid, the second step being performed by the elymoclavine oxidase cloA. Paspalic acid is then further converted to D-lysergic acid. Ergopeptines are assembled from D-lysergic acid and three different amino acids by the D-lysergyl-peptide-synthetases composed each of a monomudular and a trimodular nonribosomal peptide synthetase subunit. LpsB and lpsC encode the monomodular subunits responsible for D-lysergic acid activation and incorporation into the ergopeptine backbone. LpsA1 and A2 subunits encode the trimodular nonribosomal peptide synthetase assembling the tripeptide portion of ergopeptines. LpsA1 is responsible for formation of the major ergopeptine, ergotamine, and lpsA2 for alpha-ergocryptine, the minor ergopeptine of the total alkaloid mixture elaborated by C.purpurea. D-lysergyl-tripeptides are assembled by the nonribosomal peptide synthetases and released as N-(D-lysergyl-aminoacyl)-lactams. Cyclolization of the D-lysergyl-tripeptides is performed by the Fe(2+)/2-ketoglutarate-dependent dioxygenase easH which introduces a hydroxyl group into N-(D-lysergyl-aminoacyl)-lactam at alpha-C of the aminoacyl residue followed by spontaneous condensation with the terminal lactam carbonyl group. This Claviceps purpurea (strain 20.1) (Ergot fungus) protein is FAD-linked oxidoreductase easE.